The sequence spans 773 residues: Lon protease homolog 2, peroxisomal (773 aa).

One can recognise a Lon N-terminal domain in the interval 9-198 (LPVILVTSGV…MCIKWMNEKK (190 aa)). 336 to 343 (GPPGIGKT) serves as a coordination point for ATP. Residues 587-766 (PLPAGVCFGL…EDVIGAMMDK (180 aa)) form the Lon proteolytic domain. Catalysis depends on residues Ser-672 and Lys-715. The Microbody targeting signal signature appears at 771–773 (AKL).

This sequence belongs to the peptidase S16 family.

It is found in the peroxisome matrix. It carries out the reaction Hydrolysis of proteins in presence of ATP.. ATP-dependent serine protease that mediates the selective degradation of misfolded and unassembled polypeptides in the peroxisomal matrix. Necessary for type 2 peroxisome targeting signal (PTS2)-containing protein processing and facilitates peroxisome matrix protein import. The chain is Lon protease homolog 2, peroxisomal from Caenorhabditis elegans.